The sequence spans 280 residues: Shikimate dehydrogenase (NADP(+)) (280 aa).

Residues 15-17 (SLS) and threonine 62 each bind shikimate. The active-site Proton acceptor is lysine 66. Shikimate is bound by residues asparagine 88 and aspartate 104. NADP(+)-binding positions include 128–132 (GAGGA), 151–156 (NRTEER), and isoleucine 222. Residue tyrosine 224 participates in shikimate binding. Glycine 245 serves as a coordination point for NADP(+).

Belongs to the shikimate dehydrogenase family. As to quaternary structure, homodimer.

The catalysed reaction is shikimate + NADP(+) = 3-dehydroshikimate + NADPH + H(+). It participates in metabolic intermediate biosynthesis; chorismate biosynthesis; chorismate from D-erythrose 4-phosphate and phosphoenolpyruvate: step 4/7. Functionally, involved in the biosynthesis of the chorismate, which leads to the biosynthesis of aromatic amino acids. Catalyzes the reversible NADPH linked reduction of 3-dehydroshikimate (DHSA) to yield shikimate (SA). This Methanosarcina mazei (strain ATCC BAA-159 / DSM 3647 / Goe1 / Go1 / JCM 11833 / OCM 88) (Methanosarcina frisia) protein is Shikimate dehydrogenase (NADP(+)).